A 144-amino-acid polypeptide reads, in one-letter code: Large ribosomal subunit protein uL13 (144 aa).

Belongs to the universal ribosomal protein uL13 family. Part of the 50S ribosomal subunit.

Its function is as follows. This protein is one of the early assembly proteins of the 50S ribosomal subunit, although it is not seen to bind rRNA by itself. It is important during the early stages of 50S assembly. In Clostridium perfringens (strain 13 / Type A), this protein is Large ribosomal subunit protein uL13.